Consider the following 311-residue polypeptide: uncharacterized protein (311 aa).

Helical transmembrane passes span isoleucine 6–alanine 26, proline 33–valine 53, tyrosine 70–valine 90, threonine 97–leucine 117, glycine 123–alanine 143, leucine 155–serine 175, tyrosine 185–valine 205, isoleucine 219–glycine 239, threonine 244–alanine 264, and isoleucine 265–isoleucine 285. EamA domains are found at residues alanine 12–asparagine 141 and valine 166–serine 292.

It belongs to the EamA transporter family.

It is found in the cell membrane. This is an uncharacterized protein from Clostridium kluyveri (strain ATCC 8527 / DSM 555 / NBRC 12016 / NCIMB 10680 / K1).